An 86-amino-acid chain; its full sequence is Ferredoxin-like protein YgcO (86 aa).

The 4Fe-4S ferredoxin-type domain occupies 45-74 (GNLRIDYRSCLECGTCRLLCDESTLQQWRY).

It belongs to the bacterial-type ferredoxin family. FixX subfamily.

Could be a 3Fe-4S cluster-containing protein. Probably participates in a redox process with YgcN, YgcQ and YgcR. This Escherichia coli (strain K12) protein is Ferredoxin-like protein YgcO (ygcO).